Reading from the N-terminus, the 431-residue chain is MKQYIEIIDVVARQILDSRCFPTVEVEVYLEDGTVGRAAVPSGASTGIYEAVELRDGDKDKYLGKGVEKAVANVNDTIAEEIIGLNVLDQAYIDKTLIELDGTKNKGKLGANAILGVSLAVAQAAANYLGMPLYQYIGGVNAKVLPVPMMNIINGGSHADNSVDIQEFMIMPVGFDCFERAVRACAEVYHALKKTLNSKGYSTGVGDEGGFAPNLKSNAEAIEVILEAIEKAGYEPGKEFFIAIDAASSEYYKDGKYVLEHEGKTLTAAEMVDFFEDWVNKYPIISIEDGMAEEDWEGWKLMTERLGKKVQLVGDDLFVTNTERLKTGIEKGIANSILIKLNQIGTLTETLNAIEMANRAGYTAVVSHRSGETEDTTIADLVVAVNAGQIKTGAPARSERVAKYNQLIRINEELGEVAEYRGRNAFFNLSK.

Position 166 (Gln166) interacts with (2R)-2-phosphoglycerate. Glu208 functions as the Proton donor in the catalytic mechanism. The Mg(2+) site is built by Asp245, Glu288, and Asp315. Positions 340, 369, 370, and 391 each coordinate (2R)-2-phosphoglycerate. The Proton acceptor role is filled by Lys340.

Belongs to the enolase family. It depends on Mg(2+) as a cofactor.

It localises to the cytoplasm. The protein resides in the secreted. It is found in the cell surface. It catalyses the reaction (2R)-2-phosphoglycerate = phosphoenolpyruvate + H2O. Its pathway is carbohydrate degradation; glycolysis; pyruvate from D-glyceraldehyde 3-phosphate: step 4/5. Its function is as follows. Catalyzes the reversible conversion of 2-phosphoglycerate (2-PG) into phosphoenolpyruvate (PEP). It is essential for the degradation of carbohydrates via glycolysis. The sequence is that of Enolase from Clostridium perfringens (strain ATCC 13124 / DSM 756 / JCM 1290 / NCIMB 6125 / NCTC 8237 / Type A).